The primary structure comprises 66 residues: Small ribosomal subunit protein eS27 (66 aa).

4 residues coordinate Zn(2+): C21, C24, C40, and C43. A C4-type zinc finger spans residues 21–43 (CPVCGNEQVIFSHATFPARCLVC).

Belongs to the eukaryotic ribosomal protein eS27 family. As to quaternary structure, part of the 30S ribosomal subunit. The cofactor is Zn(2+).

The protein is Small ribosomal subunit protein eS27 of Hyperthermus butylicus (strain DSM 5456 / JCM 9403 / PLM1-5).